The sequence spans 262 residues: Small ribosomal subunit protein uS2 (262 aa).

The protein belongs to the universal ribosomal protein uS2 family.

The polypeptide is Small ribosomal subunit protein uS2 (Borreliella burgdorferi (strain ZS7) (Borrelia burgdorferi)).